The primary structure comprises 308 residues: Mitochondrial import receptor subunit TOM40B (308 aa).

The interval 1–29 is disordered; it reads MGNTLGLAPMGTLPRRSPRREEPLPNPGS. The interval 281–308 is required for mitochondrial targeting; sequence PLPVTLALGAFLNHWRNRFHCGFSITVG.

Belongs to the Tom40 family. In terms of assembly, forms part of the preprotein translocase of the outer mitochondrial membrane (TOM complex) containing TOMM22, TOMM40, TOMM40L and TOMM70. Interacts with mitochondrial targeting sequences.

It is found in the mitochondrion outer membrane. Functionally, potential channel-forming protein implicated in import of protein precursors into mitochondria. This chain is Mitochondrial import receptor subunit TOM40B (TOMM40L), found in Homo sapiens (Human).